Here is a 1202-residue protein sequence, read N- to C-terminus: CHD3-type chromatin-remodeling factor CHR7 (1202 aa).

Chromo domains follow at residues 45-109 (GEIE…HPHL) and 142-201 (KTVD…RDKY). The Helicase ATP-binding domain maps to 237 to 405 (RYSWSKKTNV…FALMHFLDAD (169 aa)). Residue 250–257 (DEMGLGKT) coordinates ATP. Positions 356–359 (DEGH) match the DEAH box motif. In terms of domain architecture, Helicase C-terminal spans 528 to 679 (LLDKMMVKLK…HLVVGKQHLC (152 aa)). The segment at 838–872 (TSDEEEEADEPEAARQRKPRTVTRPYRKRARDNSE) is disordered. Basic residues predominate over residues 853 to 867 (QRKPRTVTRPYRKRA).

The protein belongs to the SNF2/RAD54 helicase family.

It is found in the nucleus. Chromatin remodeling factor that represses the expression of embryonic trait genes upon and after seed germination and thus enables the developmental switch to post-germinative growth. The protein is CHD3-type chromatin-remodeling factor CHR7 of Arabidopsis thaliana (Mouse-ear cress).